A 165-amino-acid chain; its full sequence is UPF0303 protein Bcenmc03_1534 (165 aa).

Belongs to the UPF0303 family.

This chain is UPF0303 protein Bcenmc03_1534, found in Burkholderia orbicola (strain MC0-3).